The sequence spans 293 residues: 4-hydroxy-tetrahydrodipicolinate synthase 1 (293 aa).

Residue threonine 46 coordinates pyruvate. Catalysis depends on tyrosine 134, which acts as the Proton donor/acceptor. Lysine 162 functions as the Schiff-base intermediate with substrate in the catalytic mechanism. Isoleucine 204 serves as a coordination point for pyruvate.

The protein belongs to the DapA family. In terms of assembly, homotetramer; dimer of dimers.

It localises to the cytoplasm. The catalysed reaction is L-aspartate 4-semialdehyde + pyruvate = (2S,4S)-4-hydroxy-2,3,4,5-tetrahydrodipicolinate + H2O + H(+). Its pathway is amino-acid biosynthesis; L-lysine biosynthesis via DAP pathway; (S)-tetrahydrodipicolinate from L-aspartate: step 3/4. In terms of biological role, catalyzes the condensation of (S)-aspartate-beta-semialdehyde [(S)-ASA] and pyruvate to 4-hydroxy-tetrahydrodipicolinate (HTPA). The sequence is that of 4-hydroxy-tetrahydrodipicolinate synthase 1 from Clostridium acetobutylicum (strain ATCC 824 / DSM 792 / JCM 1419 / IAM 19013 / LMG 5710 / NBRC 13948 / NRRL B-527 / VKM B-1787 / 2291 / W).